A 154-amino-acid polypeptide reads, in one-letter code: Iron-sulfur cluster assembly 2 homolog, mitochondrial (154 aa).

A mitochondrion-targeting transit peptide spans methionine 1–serine 8. Fe cation-binding residues include cysteine 79, cysteine 144, and cysteine 146.

The protein belongs to the HesB/IscA family. As to quaternary structure, heterotetramer; forms a dimer of dimers with IBA57. Interacts with [2Fe-2S]-ISCA2 forming the heterodimer [2Fe- 2S]-ISCA2-IBA57 complex; [2Fe-2S] cluster binding is absolutely required to promote the complex formation.

It is found in the mitochondrion. Functionally, involved in the maturation of mitochondrial 4Fe-4S proteins functioning late in the iron-sulfur cluster assembly pathway. May be involved in the binding of an intermediate of Fe/S cluster assembly. The polypeptide is Iron-sulfur cluster assembly 2 homolog, mitochondrial (ISCA2) (Pongo abelii (Sumatran orangutan)).